We begin with the raw amino-acid sequence, 321 residues long: uncharacterized protein (321 aa).

Positions 1–22 (MKSIYKYTFMLFVFLFGTLMMA) are cleaved as a signal peptide.

Belongs to the bacterial solute-binding protein 1 family. WtpA subfamily.

This is an uncharacterized protein from Petrotoga mobilis (strain DSM 10674 / SJ95).